The following is a 258-amino-acid chain: Electron transfer flavoprotein beta subunit lysine methyltransferase (258 aa).

Belongs to the methyltransferase superfamily. ETFBKMT family.

Its subcellular location is the cytoplasm. It is found in the mitochondrion matrix. It carries out the reaction L-lysyl-[protein] + 3 S-adenosyl-L-methionine = N(6),N(6),N(6)-trimethyl-L-lysyl-[protein] + 3 S-adenosyl-L-homocysteine + 3 H(+). Protein-lysine methyltransferase that selectively trimethylates the flavoprotein ETFB in mitochondria. Thereby, may negatively regulate the function of ETFB in electron transfer from Acyl-CoA dehydrogenases to the main respiratory chain. The chain is Electron transfer flavoprotein beta subunit lysine methyltransferase from Danio rerio (Zebrafish).